The following is a 377-amino-acid chain: S-adenosylmethionine decarboxylase proenzyme 2 (377 aa).

Catalysis depends on residues Glu24 and Glu27. Residue Ser84 is the Schiff-base intermediate with substrate; via pyruvic acid of the active site. At Ser84 the chain carries Pyruvic acid (Ser); by autocatalysis. The active-site Proton donor; for catalytic activity is Cys98. Residues Ser246 and His259 each act as proton acceptor; for processing activity in the active site.

This sequence belongs to the eukaryotic AdoMetDC family. The cofactor is pyruvate. Is synthesized initially as an inactive proenzyme. Formation of the active enzyme involves a self-maturation process in which the active site pyruvoyl group is generated from an internal serine residue via an autocatalytic post-translational modification. Two non-identical subunits are generated from the proenzyme in this reaction, and the pyruvate is formed at the N-terminus of the alpha chain, which is derived from the carboxyl end of the proenzyme. The post-translation cleavage follows an unusual pathway, termed non-hydrolytic serinolysis, in which the side chain hydroxyl group of the serine supplies its oxygen atom to form the C-terminus of the beta chain, while the remainder of the serine residue undergoes an oxidative deamination to produce ammonia and the pyruvoyl group blocking the N-terminus of the alpha chain.

It catalyses the reaction S-adenosyl-L-methionine + H(+) = S-adenosyl 3-(methylsulfanyl)propylamine + CO2. The protein operates within amine and polyamine biosynthesis; S-adenosylmethioninamine biosynthesis; S-adenosylmethioninamine from S-adenosyl-L-methionine: step 1/1. The chain is S-adenosylmethionine decarboxylase proenzyme 2 (SAMDC2) from Dianthus caryophyllus (Carnation).